The sequence spans 381 residues: E3 ubiquitin-protein ligase RNF133 (381 aa).

The PA domain maps to 65 to 167 (SSILKRVAGV…VKGMEILHLI (103 aa)). A helical transmembrane segment spans residues 186 to 208 (WLNHYFVSFMIVTTATLAYFTFY). The RING-type; atypical zinc finger occupies 256–297 (CVICFEAYKPNEIVRILTCKHFFHKNCIDPWILAHGTCPMCK). The tract at residues 340–381 (LPPARTSSKVTHVQEHPTSVNVGSQPPEAEETGHPSFGQHDL) is disordered. A compositionally biased stretch (polar residues) spans 344-363 (RTSSKVTHVQEHPTSVNVGS).

Interacts with E3 ligase UBE2J1. Auto-ubiquitinated.

Its subcellular location is the endoplasmic reticulum membrane. The catalysed reaction is S-ubiquitinyl-[E2 ubiquitin-conjugating enzyme]-L-cysteine + [acceptor protein]-L-lysine = [E2 ubiquitin-conjugating enzyme]-L-cysteine + N(6)-ubiquitinyl-[acceptor protein]-L-lysine.. It participates in protein modification; protein ubiquitination. Its function is as follows. Has E3 ubiquitin-protein ligase activity. Plays a role in male fecundity through the interaction with the E2 ubituitin-protein ligase UBE2J1. This is E3 ubiquitin-protein ligase RNF133 (Rnf133) from Rattus norvegicus (Rat).